We begin with the raw amino-acid sequence, 325 residues long: 2-oxoglutarate-dependent dioxygenase tropC (325 aa).

Residues 185 to 287 form the Fe2OG dioxygenase domain; sequence PSIPMRLLHY…RYSVAFFLNG (103 aa). Residues H210, D212, and H269 each contribute to the Fe cation site. Position 278 (R278) interacts with 2-oxoglutarate.

Belongs to the iron/ascorbate-dependent oxidoreductase family. Fe(2+) is required as a cofactor.

It functions in the pathway secondary metabolite biosynthesis. 2-oxoglutarate-dependent dioxygenase; part of the gene cluster that mediates the biosynthesis of the tropolone class of fungal maleic anhydrides. The pathway begins with the synthesis of 3-methylorcinaldehyde by the non-reducing polyketide synthase (PKS) tropA. 3-methylorcinaldehyde is the substrate for the FAD-dependent monooxygenase tropB to yield a dearomatized hydroxycyclohexadione. The 2-oxoglutarate-dependent dioxygenase tropC then performs the oxidative ring expansion to provide the first tropolone metabolite stipitaldehyde. Trop D converts stipitaldehyde into stipitacetal which is in turn converted to stipitalide by the short-chain dehydrogenase/reductase tropE. The next steps involve tropF, tropG, tropH, tropI and tropJ to form successive tropolone maleic anhydrides including stipitaldehydic, stipitatonic and stipitatic acids. This Talaromyces stipitatus (strain ATCC 10500 / CBS 375.48 / QM 6759 / NRRL 1006) (Penicillium stipitatum) protein is 2-oxoglutarate-dependent dioxygenase tropC.